Here is a 422-residue protein sequence, read N- to C-terminus: Serine hydroxymethyltransferase (422 aa).

121 to 123 (GHI) is a (6S)-5,6,7,8-tetrahydrofolate binding site. The residue at position 227 (Lys-227) is an N6-(pyridoxal phosphate)lysine. Glu-245 serves as a coordination point for (6S)-5,6,7,8-tetrahydrofolate.

Belongs to the SHMT family. In terms of assembly, homodimer. It depends on pyridoxal 5'-phosphate as a cofactor.

Its subcellular location is the cytoplasm. The catalysed reaction is 5,10-methylenetetrahydromethanopterin + glycine + H2O = 5,6,7,8-tetrahydromethanopterin + L-serine. It participates in amino-acid biosynthesis; glycine biosynthesis; glycine from L-serine: step 1/1. Catalyzes the reversible interconversion of serine and glycine with tetrahydromethanopterin (H4MPT) serving as the one-carbon carrier. Also exhibits a pteridine-independent aldolase activity toward beta-hydroxyamino acids, producing glycine and aldehydes, via a retro-aldol mechanism. The chain is Serine hydroxymethyltransferase from Methanobrevibacter smithii (strain ATCC 35061 / DSM 861 / OCM 144 / PS).